The following is a 1227-amino-acid chain: Protein transport protein Sec31A (1227 aa).

7 WD repeats span residues 4 to 47 (KEID…EIFE), 64 to 111 (SSAH…AGDT), 120 to 160 (KHTG…TPMT), 166 to 206 (QPLE…PIIK), 209 to 254 (DHNN…SPLR), 258 to 298 (SHTR…VLYE), and 301 to 342 (TNMQ…DGLR). Residues 397 to 430 (SFSFGGKLVTFENAKPQQQPGIDQQPQHHYVYVS) form a WD 8; interaction with SEC13 repeat. Disordered stretches follow at residues 804–875 (EAIK…YSQA), 905–1008 (QPVA…GWND), and 1040–1075 (ADPQAQMQQPPAAPVGTPSFQPQQLSTGQQAPLGPY). Over residues 905–924 (QPVAAPASASYPSPASNTNP) the composition is skewed to low complexity. The span at 925-945 (PYLPAAQPVPSPLYPGQPQPS) shows a compositional bias: pro residues. The segment covering 995–1006 (PASQRTGPQNGW) has biased composition (polar residues). Residues 1040 to 1049 (ADPQAQMQQP) are compositionally biased toward low complexity. The span at 1057-1069 (PSFQPQQLSTGQQ) shows a compositional bias: polar residues.

This sequence belongs to the WD repeat SEC31 family. COPII is composed of at least 5 proteins: the SEC23/24 complex, the SEC13/31 complex and SAR1. SEC13 and SEC31 make a 2:2 tetramer that forms the edge element of the COPII outer coat. The tetramer self-assembles in multiple copies to form the complete polyhedral cage. Interacts (via WD 8) with SEC13.

The protein localises to the cytoplasm. It localises to the cytoplasmic vesicle. It is found in the COPII-coated vesicle membrane. The protein resides in the endoplasmic reticulum membrane. In terms of biological role, component of the coat protein complex II (COPII) which promotes the formation of transport vesicles from the endoplasmic reticulum (ER). The coat has two main functions, the physical deformation of the endoplasmic reticulum membrane into vesicles and the selection of cargo molecules. The polypeptide is Protein transport protein Sec31A (SEC31A) (Gallus gallus (Chicken)).